A 37-amino-acid chain; its full sequence is DCVGESQQCADWAGPHCCDGYYCTCRYFPKCICVNNN.

4 disulfides stabilise this stretch: Cys2–Cys18, Cys9–Cys23, Cys17–Cys33, and Cys25–Cys31. At Asn37 the chain carries Asparagine amide.

The protein belongs to the neurotoxin 07 (Beta/delta-agtx) family. 03 (aga-4) subfamily. Aga sub-subfamily. Expressed by the venom gland.

It localises to the secreted. Functionally, insecticidal neurotoxin that induces an irreversible spastic paralysis when injected into insects. Modifies presynaptic voltage-gated sodium channels (Nav), causing them to open at the normal resting potential of the nerve. This leads to spontaneous release of neurotransmitter and repetitive action potentials in motor neurons. This chain is Mu-agatoxin-Aa1f, found in Agelenopsis aperta (North American funnel-web spider).